The following is a 103-amino-acid chain: Histone H4 (103 aa).

The span at 1 to 14 shows a compositional bias: gly residues; that stretch reads MSGRGKGGKGLGKG. Residues 1–20 form a disordered region; it reads MSGRGKGGKGLGKGGAKRHR. Ser2 is subject to N-acetylserine. Lys6 and Lys13 each carry N6-acetyl-N6-methyllysine; alternate. The residue at position 17 (Lys17) is an N6-acetyllysine. The DNA-binding element occupies 17 to 21; sequence KRHRK. Lys21 is modified (N6-methyllysine).

It belongs to the histone H4 family. As to quaternary structure, the nucleosome is a histone octamer containing two molecules each of H2A, H2B, H3 and H4 assembled in one H3-H4 heterotetramer and two H2A-H2B heterodimers. The octamer wraps approximately 147 bp of DNA.

It is found in the nucleus. The protein localises to the chromosome. Functionally, core component of nucleosome. Nucleosomes wrap and compact DNA into chromatin, limiting DNA accessibility to the cellular machineries which require DNA as a template. Histones thereby play a central role in transcription regulation, DNA repair, DNA replication and chromosomal stability. DNA accessibility is regulated via a complex set of post-translational modifications of histones, also called histone code, and nucleosome remodeling. This Dendronephthya klunzingeri (Klunzinger's soft coral) protein is Histone H4 (H4DEKL).